A 175-amino-acid chain; its full sequence is uncharacterized protein (175 aa).

Residues 143-166 (TCFLFCAFVTSIFIETDYSIFFLL) traverse the membrane as a helical segment.

It localises to the membrane. This is an uncharacterized protein from Saccharomyces cerevisiae (strain ATCC 204508 / S288c) (Baker's yeast).